The following is a 396-amino-acid chain: Ribosomal RNA large subunit methyltransferase I (396 aa).

Residues 2-79 (TSAVYLQAGR…EKEVIDQHFF (78 aa)) enclose the PUA domain.

It belongs to the methyltransferase superfamily. RlmI family.

Its subcellular location is the cytoplasm. The catalysed reaction is cytidine(1962) in 23S rRNA + S-adenosyl-L-methionine = 5-methylcytidine(1962) in 23S rRNA + S-adenosyl-L-homocysteine + H(+). Specifically methylates the cytosine at position 1962 (m5C1962) of 23S rRNA. The polypeptide is Ribosomal RNA large subunit methyltransferase I (Pseudoalteromonas translucida (strain TAC 125)).